A 510-amino-acid polypeptide reads, in one-letter code: UDP-N-acetylmuramate--L-alanine ligase (510 aa).

The interval 1–25 is disordered; it reads MVETVGGKDAVAPAPARSPSPPAKN. 140 to 146 contacts ATP; it reads GTHGKTT.

It belongs to the MurCDEF family.

The protein localises to the cytoplasm. It catalyses the reaction UDP-N-acetyl-alpha-D-muramate + L-alanine + ATP = UDP-N-acetyl-alpha-D-muramoyl-L-alanine + ADP + phosphate + H(+). The protein operates within cell wall biogenesis; peptidoglycan biosynthesis. Functionally, cell wall formation. This is UDP-N-acetylmuramate--L-alanine ligase from Synechococcus sp. (strain JA-3-3Ab) (Cyanobacteria bacterium Yellowstone A-Prime).